An 878-amino-acid polypeptide reads, in one-letter code: MADIDARLREDVHLLGELLGNTIREQRGAEFLDKIERIRKGAKAGRRGSAEGAEQLSSSVDGLGDDELLPVARAFNQFLNLANIAEQYQLMHRRDDKQPLPFESRVLPELLDRLKAEGHSPDALARQLSKLEIDLVLTAHPTEVARRTLIQKYDAIAAQLAALDHRDLNSIERTQITSRLQRLIAEAWHTEEIRRIRPTPVDEAKWGFAVIEHSLWHAIPNYLRKADHALHAATGLHLPLEAAPIRFASWMGGDRDGNPNVTAAVTREVLLLARWMAADLYLRDVDNLAAELSMQQASDALRASVGDSAEPYRAELKRLRERLRATRNWANASLSETLPAPEAVLRDNRELLDPLLLCFQSLHECGMGVIADGPLLDCLRRAVTFGLFLVRLDVRQDSSRHCAAMTEITDYLGLGRYEEWDEQTRIDFLLRELNNRRPLLPSYFKPAADTAEVLATCREVAAAPAASLGSYVISMAGSASDVLAVQLLLKESGLQRPMRVVPLFETLADLDNAGPVIETLLGLPGYRSRLHGPQEVMIGYSDSAKDAGTTAAAWAQYRAQERLVEICREQQVELLLFHGRGGTVGRGGGPAHAAILSQPPGSVAGRFRTTEQGEMIRFKFGLPDIAEQNLNLYLAAVLEATLLPPPPPQPAWRTMMDQMADDGVSAYRAVVRENPEFVEYFRQATPEQELGRLPLGSRPAKRREGGVESLRAIPWIFAWTQTRLMLPAWLGWEAALSKALERGEGEVLAQMREQWPFFRTRIDMLEMVLAKADADIARLYDERLVSAELQHLGAHLRDLLSQACNVVLGLTGQTQLLAHSPETLEFISLRNTYLDPLHLLQAELLSRSRNREASLDSPLELALLVSVAGIAAGLRNTG.

Residues His-140 and Lys-545 contribute to the active site.

It belongs to the PEPCase type 1 family. Requires Mg(2+) as cofactor.

It carries out the reaction oxaloacetate + phosphate = phosphoenolpyruvate + hydrogencarbonate. Forms oxaloacetate, a four-carbon dicarboxylic acid source for the tricarboxylic acid cycle. In Pseudomonas syringae pv. syringae (strain B728a), this protein is Phosphoenolpyruvate carboxylase.